The primary structure comprises 539 residues: MLPSTISYRIYKNALFFAALFGAVQAQKVGTSKAEVHPSMAWQTCAADGTCTTKNGKVVIDANWRWVHDVKGYTNCYTGNTWNAELCPDNESCAENCALEGADYAATYGATTSGNALSLKFVTQSQQKNIGSRLYMMKDDNTYETFKLLNQEFTFDVDVSNLPCGLNGALYFVSMDADGGLSRYTGNEAGAKYGTGYCDSQCPRDLKFINGLANVEGWTPSSSDANAGNGGHGSCCAEMDIWEANSISTAYTPHPCDTPGQAMCNGDSCGGTYSSDRYGGTCDPDGCDFNSYRQGNKSFYGPGMTVDTKKKMTVVTQFLTNDGTATGTLSEIKRFYVQDGKVIANSESTWPNLGGNSLTNDFCKAQKTVFGDMDTFSKHGGMEGMGAALAEGMVLVMSLWDDHNSNMLWLDSNSPTTGTSTTPGVARGSCDISSGDPKDLEANHPDASVVYSNIKVGPIGSTFNSGGSNPGGSTTTTKPATSTTTTKATTTATTNTTGPTGTGVAQPWAQCGGIGYSGPTQCAAPYTCTKQNDYYSQCL.

The signal sequence occupies residues 1–26; that stretch reads MLPSTISYRIYKNALFFAALFGAVQA. The catalytic stretch occupies residues 27 to 461; it reads QKVGTSKAEV…SNIKVGPIGS (435 aa). A glycan (N-linked (GlcNAc...) asparagine) is linked at N90. Residue E238 is the Nucleophile of the active site. The active-site Proton donor is the E243. Residues N296 and N495 are each glycosylated (N-linked (GlcNAc...) asparagine). The tract at residues 462–503 is thr-rich linker; sequence TFNSGGSNPGGSTTTTKPATSTTTTKATTTATTNTTGPTGTG. The span at 462-503 shows a compositional bias: low complexity; the sequence is TFNSGGSNPGGSTTTTKPATSTTTTKATTTATTNTTGPTGTG. The interval 462–504 is disordered; the sequence is TFNSGGSNPGGSTTTTKPATSTTTTKATTTATTNTTGPTGTGV. The region spanning 503–539 is the CBM1 domain; it reads GVAQPWAQCGGIGYSGPTQCAAPYTCTKQNDYYSQCL. 2 cysteine pairs are disulfide-bonded: C511/C528 and C522/C538.

The protein belongs to the glycosyl hydrolase 7 (cellulase C) family.

It localises to the secreted. The enzyme catalyses Hydrolysis of (1-&gt;4)-beta-D-glucosidic linkages in cellulose and cellotetraose, releasing cellobiose from the non-reducing ends of the chains.. Functionally, the biological conversion of cellulose to glucose generally requires three types of hydrolytic enzymes: (1) Endoglucanases which cut internal beta-1,4-glucosidic bonds; (2) Exocellobiohydrolases that cut the disaccharide cellobiose from the non-reducing end of the cellulose polymer chain; (3) Beta-1,4-glucosidases which hydrolyze the cellobiose and other short cello-oligosaccharides to glucose. The polypeptide is Probable 1,4-beta-D-glucan cellobiohydrolase B (cbhB) (Aspergillus clavatus (strain ATCC 1007 / CBS 513.65 / DSM 816 / NCTC 3887 / NRRL 1 / QM 1276 / 107)).